We begin with the raw amino-acid sequence, 235 residues long: (5-formylfuran-3-yl)methyl phosphate synthase (235 aa).

Residue lysine 27 is the Schiff-base intermediate with substrate of the active site. Lysine 86 functions as the Proton acceptor in the catalytic mechanism.

It belongs to the MfnB family.

It catalyses the reaction 2 D-glyceraldehyde 3-phosphate = 4-(hydroxymethyl)-2-furancarboxaldehyde phosphate + phosphate + 2 H2O. Its pathway is cofactor biosynthesis; methanofuran biosynthesis. Functionally, catalyzes the formation of 4-(hydroxymethyl)-2-furancarboxaldehyde phosphate (4-HFC-P) from two molecules of glyceraldehyde-3-P (GA-3-P). This chain is (5-formylfuran-3-yl)methyl phosphate synthase, found in Archaeoglobus fulgidus (strain ATCC 49558 / DSM 4304 / JCM 9628 / NBRC 100126 / VC-16).